A 938-amino-acid polypeptide reads, in one-letter code: Isoleucine--tRNA ligase (938 aa).

A 'HIGH' region motif is present at residues 58–68; that stretch reads PYANGNIHIGH. Glu562 serves as a coordination point for L-isoleucyl-5'-AMP. The 'KMSKS' region motif lies at 603–607; that stretch reads KMSKS. Lys606 is an ATP binding site. Zn(2+) is bound by residues Cys901, Cys904, Cys921, and Cys924.

It belongs to the class-I aminoacyl-tRNA synthetase family. IleS type 1 subfamily. As to quaternary structure, monomer. The cofactor is Zn(2+).

It is found in the cytoplasm. It catalyses the reaction tRNA(Ile) + L-isoleucine + ATP = L-isoleucyl-tRNA(Ile) + AMP + diphosphate. Functionally, catalyzes the attachment of isoleucine to tRNA(Ile). As IleRS can inadvertently accommodate and process structurally similar amino acids such as valine, to avoid such errors it has two additional distinct tRNA(Ile)-dependent editing activities. One activity is designated as 'pretransfer' editing and involves the hydrolysis of activated Val-AMP. The other activity is designated 'posttransfer' editing and involves deacylation of mischarged Val-tRNA(Ile). The protein is Isoleucine--tRNA ligase of Actinobacillus pleuropneumoniae serotype 5b (strain L20).